The following is an 81-amino-acid chain: Protein I5 homolog (81 aa).

2 consecutive transmembrane segments (helical) span residues 8–28 (LITI…FSLV) and 53–73 (MEIF…AAYI).

It belongs to the Chordopoxvirinae I5 family.

It localises to the virion membrane. The chain is Protein I5 homolog from Vertebrata (FPV).